A 681-amino-acid chain; its full sequence is Sodium/glucose cotransporter 4 (681 aa).

The Extracellular portion of the chain corresponds to 1-36 (MSKELAAMGPGASGDGVRTETAPHIALDSRVGLHAY). A helical transmembrane segment spans residues 37 to 57 (DISVVVIYFVFVIAVGIWSSI). At 58–75 (RASRGTIGGYFLAGRSMS) the chain is on the cytoplasmic side. The chain crosses the membrane as a helical span at residues 76–98 (WWPIGASLMSSNVGSGLFIGLAG). Residues 99–114 (TGAAGGLAVGGFEWNA) lie on the Extracellular side of the membrane. A helical transmembrane segment spans residues 115 to 135 (TWLLLALGWVFVPVYIAAGVV). At 136–157 (TMPQYLKKRFGGQRIQVYMSVL) the chain is on the cytoplasmic side. A helical membrane pass occupies residues 158-178 (SLILYIFTKISTDIFSGALFI). The Extracellular segment spans residues 179–190 (QMALGWNLYLST). Residues 191 to 211 (GILLVVTAVYTIAGGLMAVIY) form a helical membrane-spanning segment. Residues 212-217 (TDALQT) are Cytoplasmic-facing. The helical transmembrane segment at 218–238 (VIMVGGALVLMFLGFQDVGWY) threads the bilayer. Over 239 to 275 (PGLEQRYRQAIPNVTVPNTTCHLPRPDAFHILRDPVS) the chain is Extracellular. The N-linked (GlcNAc...) asparagine glycan is linked to N251. Residues 276–296 (GDIPWPGLIFGLTVLATWCWC) traverse the membrane as a helical segment. Residues 297-317 (TDQVIVQRSLSAKSLSHAKGG) lie on the Cytoplasmic side of the membrane. The chain crosses the membrane as a helical span at residues 318 to 338 (SVLGGYLKILPMFFIVMPGMI). Residues 339-383 (SRALFPDEVGCVDPDVCQRICGARVGCSNIAYPKLVMALMPVGLR) lie on the Extracellular side of the membrane. Residues 384–406 (GLMIAVIMAALMSSLTSIFNSSS) traverse the membrane as a helical segment. Topologically, residues 407-427 (TLFTIDVWQRFRRKSTEQELM) are cytoplasmic. A helical membrane pass occupies residues 428 to 448 (VVGRVFVVFLVVISILWIPII). At 449–459 (QSSNSGQLFDY) the chain is on the extracellular side. Residues 460-480 (IQAVTSYLAPPITALFLLAIF) traverse the membrane as a helical segment. Residues 481-487 (CKRVTEP) lie on the Cytoplasmic side of the membrane. Residues 488–508 (GAFWGLVFGLGVGLLRMILEF) form a helical membrane-spanning segment. The Extracellular segment spans residues 509–530 (SYPAPACGEVDRRPAVLKDFHY). A helical membrane pass occupies residues 531-551 (LYFAILLCGLTAIVIVIVSLC). Residues 552–660 (TTPIPEEQLT…SIEEEPLWRH (109 aa)) lie on the Cytoplasmic side of the membrane. The segment covering 579-591 (AHESTPEISERPA) has biased composition (basic and acidic residues). The disordered stretch occupies residues 579–614 (AHESTPEISERPAGECPAGGGAAENSSLGQEQPEAP). 2 positions are modified to phosphoserine: S604 and S605. A helical membrane pass occupies residues 661–681 (VCNINAVLLLAINIFLWGYFA).

This sequence belongs to the sodium:solute symporter (SSF) (TC 2.A.21) family. As to expression, expressed in the small intestine, kidney and liver.

It localises to the cell membrane. It catalyses the reaction D-mannose(out) + n Na(+)(out) = D-mannose(in) + n Na(+)(in). Its function is as follows. Electrogenic Na(+)-coupled sugar symporter that may play a primary role in D-mannose and possibly D-fructose and D-glucose transport at the plasma membrane. Transporter activity is driven by a transmembrane Na(+) electrochemical gradient set by the Na(+)/K(+) pump. Exclusively recognizes sugar substrates having a pyranose ring with an axial hydroxyl group on carbon 2. In Homo sapiens (Human), this protein is Sodium/glucose cotransporter 4.